The primary structure comprises 596 residues: Elongation factor 4 (596 aa).

Residues 2–184 (KNIRNFSIIA…TIVKNIPSPA (183 aa)) enclose the tr-type G domain. GTP is bound by residues 14–19 (DHGKST) and 131–134 (NKID).

The protein belongs to the TRAFAC class translation factor GTPase superfamily. Classic translation factor GTPase family. LepA subfamily.

The protein localises to the cell inner membrane. The catalysed reaction is GTP + H2O = GDP + phosphate + H(+). Required for accurate and efficient protein synthesis under certain stress conditions. May act as a fidelity factor of the translation reaction, by catalyzing a one-codon backward translocation of tRNAs on improperly translocated ribosomes. Back-translocation proceeds from a post-translocation (POST) complex to a pre-translocation (PRE) complex, thus giving elongation factor G a second chance to translocate the tRNAs correctly. Binds to ribosomes in a GTP-dependent manner. The chain is Elongation factor 4 from Colwellia psychrerythraea (strain 34H / ATCC BAA-681) (Vibrio psychroerythus).